Reading from the N-terminus, the 153-residue chain is Protein-export protein SecB (153 aa).

It belongs to the SecB family. In terms of assembly, homotetramer, a dimer of dimers. One homotetramer interacts with 1 SecA dimer.

The protein resides in the cytoplasm. One of the proteins required for the normal export of preproteins out of the cell cytoplasm. It is a molecular chaperone that binds to a subset of precursor proteins, maintaining them in a translocation-competent state. It also specifically binds to its receptor SecA. In Edwardsiella ictaluri (strain 93-146), this protein is Protein-export protein SecB.